Here is a 137-residue protein sequence, read N- to C-terminus: Small heat shock protein IbpA (137 aa).

Positions 28-137 (SQGNGGYPPY…TLKPRRIEIK (110 aa)) constitute a sHSP domain.

This sequence belongs to the small heat shock protein (HSP20) family. Monomer. Forms homomultimers of about 100-150 subunits at optimal growth temperatures. Conformation changes to monomers at high temperatures or high ionic concentrations.

The protein resides in the cytoplasm. Its function is as follows. Associates with aggregated proteins, together with IbpB, to stabilize and protect them from irreversible denaturation and extensive proteolysis during heat shock and oxidative stress. Aggregated proteins bound to the IbpAB complex are more efficiently refolded and reactivated by the ATP-dependent chaperone systems ClpB and DnaK/DnaJ/GrpE. Its activity is ATP-independent. The polypeptide is Small heat shock protein IbpA (Serratia proteamaculans (strain 568)).